Reading from the N-terminus, the 1015-residue chain is Proline-rich basic protein 1 (1015 aa).

Disordered regions lie at residues 1 to 111 (MLTA…SGEM), 139 to 164 (AFISPLPPGPASPAAVPRQSQVPDGG), 196 to 236 (GAAP…RTGS), 259 to 460 (LSPE…ILSQ), 488 to 678 (DAVE…APAH), 690 to 883 (VVPH…GKVL), and 991 to 1015 (PPLLLCAPPSSSGPTQPGKGSLFPL). Gly residues predominate over residues 84 to 94 (PGSGFPRGPGS). Residues 220 to 233 (PRAAGAPRPRLLLR) are compositionally biased toward low complexity. Over residues 267–276 (SSATFGSTGR) the composition is skewed to polar residues. Basic and acidic residues-rich tracts occupy residues 277–304 (SEPETRETARSTHVVLEKAKSRPLRVRD), 318–328 (LRERAIRRDKP), and 346–367 (SEEKIQEARKTRFPREAPDRTV). The segment covering 380 to 391 (PSEVPSRAVRPR) has biased composition (low complexity). The span at 531-542 (IAFTQEAQNGLT) shows a compositional bias: polar residues. 2 stretches are compositionally biased toward pro residues: residues 548–557 (PPTPSAPGTP) and 691–700 (VPHPYEPPEP). Residues 759 to 774 (ENRDVEAQRLVPDGDG) show a composition bias toward basic and acidic residues. Pro residues predominate over residues 813 to 825 (GIAPKPKTPPTAP). Low complexity-rich tracts occupy residues 826–835 (EPAAAVQAPL) and 847–858 (APAQPRAASAPP). Over residues 861-870 (RSPQSPSQGA) the composition is skewed to polar residues. Over residues 993–1004 (LLLCAPPSSSGP) the composition is skewed to low complexity.

The protein is Proline-rich basic protein 1 (PROB1) of Homo sapiens (Human).